The sequence spans 490 residues: Bifunctional protein HldE (490 aa).

Positions M1 to A330 are ribokinase. N205–E208 is an ATP binding site. Residue D275 is part of the active site. The cytidylyltransferase stretch occupies residues F358–S490.

It in the N-terminal section; belongs to the carbohydrate kinase PfkB family. This sequence in the C-terminal section; belongs to the cytidylyltransferase family. In terms of assembly, homodimer.

The enzyme catalyses D-glycero-beta-D-manno-heptose 7-phosphate + ATP = D-glycero-beta-D-manno-heptose 1,7-bisphosphate + ADP + H(+). It carries out the reaction D-glycero-beta-D-manno-heptose 1-phosphate + ATP + H(+) = ADP-D-glycero-beta-D-manno-heptose + diphosphate. It participates in nucleotide-sugar biosynthesis; ADP-L-glycero-beta-D-manno-heptose biosynthesis; ADP-L-glycero-beta-D-manno-heptose from D-glycero-beta-D-manno-heptose 7-phosphate: step 1/4. Its pathway is nucleotide-sugar biosynthesis; ADP-L-glycero-beta-D-manno-heptose biosynthesis; ADP-L-glycero-beta-D-manno-heptose from D-glycero-beta-D-manno-heptose 7-phosphate: step 3/4. Functionally, catalyzes the phosphorylation of D-glycero-D-manno-heptose 7-phosphate at the C-1 position to selectively form D-glycero-beta-D-manno-heptose-1,7-bisphosphate. Catalyzes the ADP transfer from ATP to D-glycero-beta-D-manno-heptose 1-phosphate, yielding ADP-D-glycero-beta-D-manno-heptose. The chain is Bifunctional protein HldE from Rhodopseudomonas palustris (strain BisA53).